The primary structure comprises 122 residues: NADPH-dependent 7-cyano-7-deazaguanine reductase (122 aa).

Residue Cys34 is the Thioimide intermediate of the active site. The active-site Proton donor is the Asp41. Substrate-binding positions include 56–58 (VEL) and 75–76 (HE).

It belongs to the GTP cyclohydrolase I family. QueF type 1 subfamily.

The protein resides in the cytoplasm. It carries out the reaction 7-aminomethyl-7-carbaguanine + 2 NADP(+) = 7-cyano-7-deazaguanine + 2 NADPH + 3 H(+). It functions in the pathway tRNA modification; tRNA-queuosine biosynthesis. Functionally, catalyzes the NADPH-dependent reduction of 7-cyano-7-deazaguanine (preQ0) to 7-aminomethyl-7-deazaguanine (preQ1). This Anaeromyxobacter dehalogenans (strain 2CP-1 / ATCC BAA-258) protein is NADPH-dependent 7-cyano-7-deazaguanine reductase.